The following is a 189-amino-acid chain: Putative biopolymer transport protein ExbB-like 1 (189 aa).

A run of 3 helical transmembrane segments spans residues 14 to 34 (FVTTLVLVWISLYLVMTLWVF), 99 to 119 (LVVLSIISSTAPFIGLFGTVV), and 147 to 167 (LIATAAGILAAIPAYSFYLIL).

This sequence belongs to the ExbB/TolQ family.

Its subcellular location is the cell inner membrane. The protein is Putative biopolymer transport protein ExbB-like 1 of Helicobacter pylori (strain J99 / ATCC 700824) (Campylobacter pylori J99).